Consider the following 271-residue polypeptide: Phosphate import ATP-binding protein PstB (271 aa).

The region spanning 25–266 (FDTKNLNLWY…PSDKRTEDYI (242 aa)) is the ABC transporter domain. An ATP-binding site is contributed by 57-64 (GPSGCGKS).

Belongs to the ABC transporter superfamily. Phosphate importer (TC 3.A.1.7) family. As to quaternary structure, the complex is composed of two ATP-binding proteins (PstB), two transmembrane proteins (PstC and PstA) and a solute-binding protein (PstS).

The protein localises to the cell membrane. The catalysed reaction is phosphate(out) + ATP + H2O = ADP + 2 phosphate(in) + H(+). Functionally, part of the ABC transporter complex PstSACB involved in phosphate import. Responsible for energy coupling to the transport system. The chain is Phosphate import ATP-binding protein PstB from Bacillus cereus (strain ATCC 14579 / DSM 31 / CCUG 7414 / JCM 2152 / NBRC 15305 / NCIMB 9373 / NCTC 2599 / NRRL B-3711).